Consider the following 396-residue polypeptide: Glyceraldehyde-3-phosphate dehydrogenase GAPA1, chloroplastic (396 aa).

The N-terminal 60 residues, 1 to 60, are a transit peptide targeting the chloroplast; it reads MASVTFSVPKGFTEFSGLRSSSASLPFGKKLSSDEFVSIVSFQTSAMGSSGGYRKGVTEA. NADP(+)-binding positions include 71–72, D95, and R140; that span reads RI. D-glyceraldehyde 3-phosphate-binding positions include 212–214, T243, R258, 271–272, and R294; these read SCT and TG. The Nucleophile role is filled by C213. N376 contacts NADP(+).

It belongs to the glyceraldehyde-3-phosphate dehydrogenase family. Tetramer of either four A chains (GAPDH 2) or two A and two B chains (GAPDH 1). In terms of tissue distribution, expressed in leaves and stems.

Its subcellular location is the plastid. It is found in the chloroplast membrane. It localises to the chloroplast stroma. It catalyses the reaction D-glyceraldehyde 3-phosphate + phosphate + NADP(+) = (2R)-3-phospho-glyceroyl phosphate + NADPH + H(+). It functions in the pathway carbohydrate biosynthesis; Calvin cycle. In terms of biological role, involved in the photosynthetic reductive pentose phosphate pathway (Calvin-Benson cycle). Catalyzes the reduction of 1,3-diphosphoglycerate by NADPH. The polypeptide is Glyceraldehyde-3-phosphate dehydrogenase GAPA1, chloroplastic (GAPA1) (Arabidopsis thaliana (Mouse-ear cress)).